The chain runs to 150 residues: Ribosome maturation factor RimP (150 aa).

It belongs to the RimP family.

Its subcellular location is the cytoplasm. Required for maturation of 30S ribosomal subunits. The protein is Ribosome maturation factor RimP of Francisella tularensis subsp. mediasiatica (strain FSC147).